An 879-amino-acid polypeptide reads, in one-letter code: Alanine--tRNA ligase (879 aa).

The interval Lys426 to Ser449 is disordered. Residues His566, His570, Cys668, and His672 each contribute to the Zn(2+) site.

This sequence belongs to the class-II aminoacyl-tRNA synthetase family. Requires Zn(2+) as cofactor.

The protein localises to the cytoplasm. It carries out the reaction tRNA(Ala) + L-alanine + ATP = L-alanyl-tRNA(Ala) + AMP + diphosphate. Its function is as follows. Catalyzes the attachment of alanine to tRNA(Ala) in a two-step reaction: alanine is first activated by ATP to form Ala-AMP and then transferred to the acceptor end of tRNA(Ala). Also edits incorrectly charged Ser-tRNA(Ala) and Gly-tRNA(Ala) via its editing domain. This chain is Alanine--tRNA ligase, found in Clostridioides difficile (strain 630) (Peptoclostridium difficile).